A 1167-amino-acid chain; its full sequence is ATP-dependent helicase/deoxyribonuclease subunit B (1167 aa).

The UvrD-like helicase ATP-binding domain occupies 1–359; it reads MSLRFLLGRS…IRQTEAYRDL (359 aa). 8-15 serves as a coordination point for ATP; that stretch reads GRSGSGKT. One can recognise a UvrD-like helicase C-terminal domain in the interval 282 to 588; the sequence is VNRRHQDKAL…EFALVPPAID (307 aa). Cys-803, Cys-1125, Cys-1128, and Cys-1134 together coordinate [4Fe-4S] cluster.

The protein belongs to the helicase family. AddB/RexB type 1 subfamily. As to quaternary structure, heterodimer of AddA and AddB. It depends on Mg(2+) as a cofactor. Requires [4Fe-4S] cluster as cofactor.

In terms of biological role, the heterodimer acts as both an ATP-dependent DNA helicase and an ATP-dependent, dual-direction single-stranded exonuclease. Recognizes the chi site generating a DNA molecule suitable for the initiation of homologous recombination. The AddB subunit has 5' -&gt; 3' nuclease activity but not helicase activity. In Geobacillus thermodenitrificans (strain NG80-2), this protein is ATP-dependent helicase/deoxyribonuclease subunit B.